Here is a 376-residue protein sequence, read N- to C-terminus: D-alanine--D-alanine ligase (376 aa).

One can recognise an ATP-grasp domain in the interval 155–361 (KIIFEKAGIP…YPELIEKLID (207 aa)). 188-243 (EEKFSYPVFVKPSNAGSSVGVSKAHDKNELKEALIYAARYDRKVLIEEFINGREVE) is an ATP binding site. Mg(2+) contacts are provided by D314, E328, and N330.

It belongs to the D-alanine--D-alanine ligase family. It depends on Mg(2+) as a cofactor. Mn(2+) is required as a cofactor.

It is found in the cytoplasm. The catalysed reaction is 2 D-alanine + ATP = D-alanyl-D-alanine + ADP + phosphate + H(+). The protein operates within cell wall biogenesis; peptidoglycan biosynthesis. Functionally, cell wall formation. The protein is D-alanine--D-alanine ligase of Acetivibrio thermocellus (strain ATCC 27405 / DSM 1237 / JCM 9322 / NBRC 103400 / NCIMB 10682 / NRRL B-4536 / VPI 7372) (Clostridium thermocellum).